A 257-amino-acid chain; its full sequence is BTB/POZ domain-containing protein kctd15-like (257 aa).

Phosphoserine is present on residues S9 and S12. Residues 30–100 (APVHIDVGGH…LRTSKLLLPE (71 aa)) enclose the BTB domain.

This is BTB/POZ domain-containing protein kctd15-like (kctd15l) from Danio rerio (Zebrafish).